Here is a 352-residue protein sequence, read N- to C-terminus: Spermidine/putrescine import ATP-binding protein PotA (352 aa).

The region spanning Ile7–Ile237 is the ABC transporter domain. Gly39–Thr46 is a binding site for ATP.

The protein belongs to the ABC transporter superfamily. Spermidine/putrescine importer (TC 3.A.1.11.1) family. As to quaternary structure, the complex is composed of two ATP-binding proteins (PotA), two transmembrane proteins (PotB and PotC) and a solute-binding protein (PotD).

It localises to the cell membrane. It carries out the reaction ATP + H2O + polyamine-[polyamine-binding protein]Side 1 = ADP + phosphate + polyamineSide 2 + [polyamine-binding protein]Side 1.. Functionally, part of the ABC transporter complex PotABCD involved in spermidine/putrescine import. Responsible for energy coupling to the transport system. This Clostridium acetobutylicum (strain ATCC 824 / DSM 792 / JCM 1419 / IAM 19013 / LMG 5710 / NBRC 13948 / NRRL B-527 / VKM B-1787 / 2291 / W) protein is Spermidine/putrescine import ATP-binding protein PotA.